The sequence spans 152 residues: Small ribosomal subunit protein uS11 (152 aa).

The protein belongs to the universal ribosomal protein uS11 family. As to quaternary structure, component of the small ribosomal subunit. Part of the small subunit (SSU) processome, composed of more than 70 proteins and the RNA chaperone small nucleolar RNA (snoRNA) U3.

The protein resides in the cytoplasm. It localises to the nucleus. It is found in the nucleolus. Component of the small ribosomal subunit. The ribosome is a large ribonucleoprotein complex responsible for the synthesis of proteins in the cell. Part of the small subunit (SSU) processome, first precursor of the small eukaryotic ribosomal subunit. During the assembly of the SSU processome in the nucleolus, many ribosome biogenesis factors, an RNA chaperone and ribosomal proteins associate with the nascent pre-rRNA and work in concert to generate RNA folding, modifications, rearrangements and cleavage as well as targeted degradation of pre-ribosomal RNA by the RNA exosome. The polypeptide is Small ribosomal subunit protein uS11 (rps-14) (Caenorhabditis elegans).